A 144-amino-acid chain; its full sequence is Large ribosomal subunit protein uL15 (144 aa).

The segment at Met-1–Gln-54 is disordered. Gly residues predominate over residues Arg-21–Gly-31.

This sequence belongs to the universal ribosomal protein uL15 family. As to quaternary structure, part of the 50S ribosomal subunit.

In terms of biological role, binds to the 23S rRNA. This is Large ribosomal subunit protein uL15 from Escherichia coli (strain K12 / MC4100 / BW2952).